A 717-amino-acid chain; its full sequence is Homeobox protein araucan (717 aa).

Disordered stretches follow at residues 46–80 (APAMSPTGGQDCQGSQPSGGAGGDASSGALSPNAL), 94–130 (GGSSAGGGGPADLATGGSLDGNGVGTTPTAGGAGGGG), 317–371 (NKMT…AIDE), 395–418 (SGGYPGGGGSSSGHPGGYHPYHHQ), 478–516 (TPPPAYMGHQSMPLQQQQQQQQQQQQAQHQYPPSEAGRD), 549–615 (TNNS…ASQR), and 675–717 (ARLG…KFTN). Residues 94–103 (GGSSAGGGGP) are compositionally biased toward gly residues. A DNA-binding region (homeobox; TALE-type) is located at residues 255–317 (LAARRKNATR…NARRRLKKEN (63 aa)). Positions 317-327 (NKMTWEPKNRT) are enriched in basic and acidic residues. The residue at position 336 (Ser336) is a Phosphoserine. The segment covering 337-347 (DDEKDKEDLEP) has biased composition (basic and acidic residues). Residues 395 to 410 (SGGYPGGGGSSSGHPG) show a composition bias toward gly residues. Composition is skewed to low complexity over residues 492–507 (QQQQQQQQQQQQAQHQ), 559–589 (PPQQQQPQQQQQQLQQGGTIHTTGSSSGPII), 599–614 (QQQQQLQQQSQSTASQ), and 687–698 (SSGNSSSSSSSS).

The protein belongs to the TALE/IRO homeobox family.

It is found in the nucleus. In terms of biological role, controls proneural and vein forming genes. Positive transcriptional controller of AC-SC (achaete-scute). May act as an activator that interacts with the transcriptional complex assembled on the AC and SC promoters and participates in transcription initiation. This is Homeobox protein araucan (ara) from Drosophila melanogaster (Fruit fly).